The sequence spans 169 residues: Transcription regulatory protein SNF11 (169 aa).

A disordered region spans residues 1–24; sequence MSSEIAYSNTNTNTENENRNTGAG. Ser-2 carries the post-translational modification N-acetylserine. Residues 9–21 are compositionally biased toward low complexity; that stretch reads NTNTNTENENRNT. 8 consecutive repeat copies span residues 28-31, 32-35, 36-39, 40-43, 44-47, 48-51, 76-80, and 160-165. The 6 X 4 AA tandem repeats of N-[AT]-[NT]-A stretch occupies residues 28-51; that stretch reads NTNANANANATANATANATANATA. A 2 X 5 AA repeats of L-L-A-R-V region spans residues 76–165; that stretch reads LLARVIQMNN…SKLYLLLARV (90 aa).

In terms of assembly, component of the SWI/SNF global transcription activator complex. The 1.14 MDa SWI/SNF complex is composed of 11 different subunits: one copy each of SWI1, SNF2/SWI2, SNF5, SNF12/SWP73, ARP7/SWP61, ARP9/SWP59; two copies each of SWI3, SNF6, SNF11, SWP82; and three copies of TAF14/SWP29.

The protein localises to the nucleus. In terms of biological role, involved in transcriptional activation. Component of the SWI/SNF complex, an ATP-dependent chromatin remodeling complex, which is required for the positive and negative regulation of gene expression of a large number of genes. It changes chromatin structure by altering DNA-histone contacts within a nucleosome, leading eventually to a change in nucleosome position, thus facilitating or repressing binding of gene-specific transcription factors. The sequence is that of Transcription regulatory protein SNF11 (SNF11) from Saccharomyces cerevisiae (strain ATCC 204508 / S288c) (Baker's yeast).